A 289-amino-acid chain; its full sequence is Acetyl-coenzyme A carboxylase carboxyl transferase subunit beta 2 (289 aa).

Positions 25-289 constitute a CoA carboxyltransferase N-terminal domain; sequence VWTKCPSCEQ…TNKSIQPEAE (265 aa). Positions 29, 32, 48, and 51 each coordinate Zn(2+). The C4-type zinc finger occupies 29–51; the sequence is CPSCEQVLYRIALKENLEVCPKC.

It belongs to the AccD/PCCB family. Acetyl-CoA carboxylase is a heterohexamer composed of biotin carboxyl carrier protein (AccB), biotin carboxylase (AccC) and two subunits each of ACCase subunit alpha (AccA) and ACCase subunit beta (AccD). It depends on Zn(2+) as a cofactor.

Its subcellular location is the cytoplasm. The catalysed reaction is N(6)-carboxybiotinyl-L-lysyl-[protein] + acetyl-CoA = N(6)-biotinyl-L-lysyl-[protein] + malonyl-CoA. Its pathway is lipid metabolism; malonyl-CoA biosynthesis; malonyl-CoA from acetyl-CoA: step 1/1. Its function is as follows. Component of the acetyl coenzyme A carboxylase (ACC) complex. Biotin carboxylase (BC) catalyzes the carboxylation of biotin on its carrier protein (BCCP) and then the CO(2) group is transferred by the transcarboxylase to acetyl-CoA to form malonyl-CoA. This Vibrio campbellii (strain ATCC BAA-1116) protein is Acetyl-coenzyme A carboxylase carboxyl transferase subunit beta 2.